A 380-amino-acid polypeptide reads, in one-letter code: MRILADENIPVVDAFFADQGSIRRLPGRAIDRAALAEVDVLLVRSVTEVSRAALAGSPVRFVGTCTIGTDHLDLDYFAEAGIAWSSAPGCNARGVVDYVLGCLLAMAEVRGADLAERTYGVVGAGQVGGRLVEVLRGLGWKVLVCDPPRQAREPDGEFVSLERLLAEADVISLHTPLNRDGEHPTRHLLDEPRLAALRPGTWLVNASRGAVVDNQALRRLLEGGADLEVALDVWEGEPQADPELAAHCLIATPHIAGYSLEGKLRGTAQIYQAYCAWRGIAERVSLQDVLPETWLAGLQLNPGCDPAWALATLCRAVYDPRSDDAAFRRSLTGDSATRRAAFDALRKHYPPRREITGLRVATGGRVELQRVVRALGAQLV.

Substrate contacts are provided by Ser45 and Thr66. NAD(+)-binding positions include 126 to 127 (QV), Asp146, Thr175, 206 to 208 (ASR), and Asp232. Residue Arg208 is part of the active site. Glu237 is a catalytic residue. Catalysis depends on His254, which acts as the Proton donor. Position 257 (Gly257) interacts with NAD(+). Tyr258 is a substrate binding site.

Belongs to the D-isomer specific 2-hydroxyacid dehydrogenase family. PdxB subfamily. As to quaternary structure, homodimer.

The protein resides in the cytoplasm. The enzyme catalyses 4-phospho-D-erythronate + NAD(+) = (R)-3-hydroxy-2-oxo-4-phosphooxybutanoate + NADH + H(+). Its pathway is cofactor biosynthesis; pyridoxine 5'-phosphate biosynthesis; pyridoxine 5'-phosphate from D-erythrose 4-phosphate: step 2/5. Functionally, catalyzes the oxidation of erythronate-4-phosphate to 3-hydroxy-2-oxo-4-phosphonooxybutanoate. This chain is Erythronate-4-phosphate dehydrogenase, found in Pseudomonas aeruginosa (strain UCBPP-PA14).